A 48-amino-acid polypeptide reads, in one-letter code: Osteocalcin (48 aa).

Residues 1 to 46 (SFAVGSSYGAAPDPLEAQREVCELNPDCDELADHIGFQEAYRRFYG) form the Gla domain. Ca(2+) is bound by residues glutamate 16, glutamate 20, glutamate 23, and aspartate 29. 3 positions are modified to 4-carboxyglutamate: glutamate 16, glutamate 20, and glutamate 23. Cysteine 22 and cysteine 28 are oxidised to a cystine.

The protein belongs to the osteocalcin/matrix Gla protein family. Gamma-carboxyglutamate residues are formed by vitamin K dependent carboxylation by GGCX. These residues are essential for the binding of calcium.

It is found in the secreted. Its function is as follows. The carboxylated form is one of the main organic components of the bone matrix, which constitutes 1-2% of the total bone protein. The carboxylated form binds strongly to apatite and calcium. This Dromaius novaehollandiae (Emu) protein is Osteocalcin (BGLAP).